Reading from the N-terminus, the 795-residue chain is Phenylalanine--tRNA ligase beta subunit (795 aa).

The tRNA-binding domain occupies 39-148 (ADEFHTVVVG…ADAPVGEDYR (110 aa)). One can recognise a B5 domain in the interval 401–476 (PKRDGITLRA…RVYGYNSIQA (76 aa)). 4 residues coordinate Mg(2+): Asp454, Asp460, Glu463, and Glu464. The 94-residue stretch at 701–794 (SRYPSIRRDL…LKSEFNATLR (94 aa)) folds into the FDX-ACB domain.

Belongs to the phenylalanyl-tRNA synthetase beta subunit family. Type 1 subfamily. Tetramer of two alpha and two beta subunits. Requires Mg(2+) as cofactor.

The protein resides in the cytoplasm. The enzyme catalyses tRNA(Phe) + L-phenylalanine + ATP = L-phenylalanyl-tRNA(Phe) + AMP + diphosphate + H(+). In Idiomarina loihiensis (strain ATCC BAA-735 / DSM 15497 / L2-TR), this protein is Phenylalanine--tRNA ligase beta subunit.